Consider the following 55-residue polypeptide: Neurotoxin B-II (55 aa).

Pro10 carries the post-translational modification Hydroxyproline. Disulfide bonds link Cys12–Cys48, Cys16–Cys52, Cys23–Cys41, and Cys26–Cys37.

This sequence belongs to the worm B-toxin family.

It is found in the secreted. In terms of biological role, this toxin increases the excitability of nerves by delaying the inactivation of the voltage-gated sodium channel (Nav). Only acts on some crustacean. Neurotoxin B-II is less abundant, but 15-fold more toxic than neurotoxin B-VI. In Cerebratulus lacteus (Milky ribbon worm), this protein is Neurotoxin B-II.